The following is a 106-amino-acid chain: Photosystem II 5 kDa protein, chloroplastic (106 aa).

Residues 1 to 76 (MASITMMSSF…ACSVAKTAMA (76 aa)) constitute a chloroplast transit peptide. A disulfide bridge connects residues Cys-95 and Cys-104.

In terms of processing, disulfide bond. In terms of tissue distribution, expressed in midvein, lamina and periphery of leaves (at protein level).

It is found in the plastid. Its subcellular location is the chloroplast thylakoid membrane. May be a component of the oxygen-evolving complex. The sequence is that of Photosystem II 5 kDa protein, chloroplastic from Petunia hybrida (Petunia).